The following is a 313-amino-acid chain: Ethylene-responsive transcription factor ERN2 (313 aa).

Residues 1–10 (MEIQFDEPKK) show a composition bias toward basic and acidic residues. The interval 1 to 29 (MEIQFDEPKKSLRPKKVNKFKGRNKKSET) is disordered. Basic residues predominate over residues 11–24 (SLRPKKVNKFKGRN). The segment at residues 32-89 (KFVGVRQRPSGRYVAEIKDTTQNIRMWLGTFETAEEAARAYDEAATLLRGSKTRTNFV) is a DNA-binding region (AP2/ERF). Disordered regions lie at residues 108 to 143 (NRKK…TSST) and 157 to 204 (TSAS…SSST). 2 stretches are compositionally biased toward low complexity: residues 122 to 143 (SSTT…TSST) and 157 to 193 (TSAS…TNVN).

It belongs to the AP2/ERF transcription factor family. ERF subfamily. As to expression, expressed in roots, root hairs and leaves. Expressed in root epidermis and root hairs.

The protein localises to the nucleus. Its function is as follows. Transcription factor involved in symbiotic nodule signaling in response to rhizobial Nod factors (NFs). Binds to the GCC box (NF-responsive box) of ENOD11 promoter. Acts as a transcriptional activator of NF-responsive box-containing target gene promoters in root hairs. Involved in early stages of root nodule development. Functions redundantly with ERN1. Is essential with ERN1 for the initiation of root hair infection, and nodule organogenesis and development. Required for accurate expression of the NF signaling genes ENOD11 and ENOD12. The polypeptide is Ethylene-responsive transcription factor ERN2 (Medicago truncatula (Barrel medic)).